A 226-amino-acid chain; its full sequence is Phosphoglycolate phosphatase (226 aa).

D10 functions as the Nucleophile in the catalytic mechanism. Mg(2+)-binding residues include D10, D12, and D175.

Belongs to the HAD-like hydrolase superfamily. CbbY/CbbZ/Gph/YieH family. Mg(2+) is required as a cofactor.

It catalyses the reaction 2-phosphoglycolate + H2O = glycolate + phosphate. The protein operates within organic acid metabolism; glycolate biosynthesis; glycolate from 2-phosphoglycolate: step 1/1. In terms of biological role, specifically catalyzes the dephosphorylation of 2-phosphoglycolate. Is involved in the dissimilation of the intracellular 2-phosphoglycolate formed during the DNA repair of 3'-phosphoglycolate ends, a major class of DNA lesions induced by oxidative stress. The sequence is that of Phosphoglycolate phosphatase from Vibrio cholerae serotype O1 (strain ATCC 39315 / El Tor Inaba N16961).